Here is a 191-residue protein sequence, read N- to C-terminus: Peptidyl-tRNA hydrolase (191 aa).

Tyr-15 is a tRNA binding site. His-20 serves as the catalytic Proton acceptor. TRNA contacts are provided by Phe-66, Asn-68, and Asn-114.

This sequence belongs to the PTH family. Monomer.

Its subcellular location is the cytoplasm. The catalysed reaction is an N-acyl-L-alpha-aminoacyl-tRNA + H2O = an N-acyl-L-amino acid + a tRNA + H(+). In terms of biological role, hydrolyzes ribosome-free peptidyl-tRNAs (with 1 or more amino acids incorporated), which drop off the ribosome during protein synthesis, or as a result of ribosome stalling. Functionally, catalyzes the release of premature peptidyl moieties from peptidyl-tRNA molecules trapped in stalled 50S ribosomal subunits, and thus maintains levels of free tRNAs and 50S ribosomes. This Streptococcus agalactiae serotype III (strain NEM316) protein is Peptidyl-tRNA hydrolase.